The primary structure comprises 429 residues: Esterase/beta-lactamase LipL (429 aa).

Serine 88 (acyl-ester intermediate) is an active-site residue.

It belongs to the beta-lactamase family.

It is found in the secreted. The protein localises to the cell wall. Its subcellular location is the cell membrane. It catalyses the reaction a fatty acid ester + H2O = an aliphatic alcohol + a fatty acid + H(+). It carries out the reaction an acetyl ester + H2O = an aliphatic alcohol + acetate + H(+). The enzyme catalyses a butanoate ester + H2O = an aliphatic alcohol + butanoate + H(+). The catalysed reaction is an octanoate ester + H2O = an aliphatic alcohol + octanoate + H(+). It catalyses the reaction decanoate ester + H2O = decanoate + an aliphatic alcohol + H(+). It carries out the reaction a dodecanoate ester + H2O = an aliphatic alcohol + dodecanoate + H(+). The enzyme catalyses a tetradecanoate ester + H2O = an aliphatic alcohol + tetradecanoate + H(+). The catalysed reaction is hexadecanoate ester + H2O = an aliphatic alcohol + hexadecanoate + H(+). It catalyses the reaction octadecanoate ester + H2O = an aliphatic alcohol + octadecanoate + H(+). It carries out the reaction a hexanoate ester + H2O = an aliphatic alcohol + hexanoate + H(+). The enzyme catalyses a beta-lactam + H2O = a substituted beta-amino acid. Its activity is regulated as follows. Esterase and beta-lactamase activities are inhibited by the active site residue modifiers phenylmethanesulfonylflouride (PMSF) and diethylpyrocarbonate (DEPC). Its function is as follows. Shows both esterase and beta-lactamase activities, with a much higher activity against phenyl esters than against beta-lactams. Shows esterase activity against both long-chain and short-chain p-nitrophenol (pNP) esters, with a preference for shorter chain esters. Hydrolyzes substrates containing beta-lactam ring such as nitrocefin and ampicillin. Functions as an immunogen that activates both humoral and cell-mediated responses. The polypeptide is Esterase/beta-lactamase LipL (Mycobacterium tuberculosis (strain ATCC 25618 / H37Rv)).